Consider the following 76-residue polypeptide: Small ribosomal subunit protein bS18 (76 aa).

It belongs to the bacterial ribosomal protein bS18 family. In terms of assembly, part of the 30S ribosomal subunit. Forms a tight heterodimer with protein bS6.

Binds as a heterodimer with protein bS6 to the central domain of the 16S rRNA, where it helps stabilize the platform of the 30S subunit. This Pelotomaculum thermopropionicum (strain DSM 13744 / JCM 10971 / SI) protein is Small ribosomal subunit protein bS18.